We begin with the raw amino-acid sequence, 546 residues long: Protein FAM124A (546 aa).

3 disordered regions span residues 1-37 (MDPKAGGGGEEDDCVDSGAETGGSDYSHLSSTSSELS), 285-361 (KFPK…QRSK), and 488-546 (SSSS…EFYI). Positions 24-36 (SDYSHLSSTSSEL) are enriched in low complexity. Basic residues predominate over residues 285 to 302 (KFPKPGRVHHSSEKKRHS). 2 stretches are compositionally biased toward polar residues: residues 304-324 (PLPSTAVPSHTPGSSQQSPLN) and 347-361 (ANSTPNPPWSFQRSK). Over residues 488-511 (SSSSATARAAPPAPSTSTLTDSSP) the composition is skewed to low complexity.

This sequence belongs to the FAM124 family.

In Pongo abelii (Sumatran orangutan), this protein is Protein FAM124A (FAM124A).